The sequence spans 117 residues: Cell cycle protein GpsB (117 aa).

Residues Leu32–Gly70 adopt a coiled-coil conformation.

The protein belongs to the GpsB family. As to quaternary structure, forms polymers through the coiled coil domains. Interacts with PBP1, MreC and EzrA.

Its subcellular location is the cytoplasm. Functionally, divisome component that associates with the complex late in its assembly, after the Z-ring is formed, and is dependent on DivIC and PBP2B for its recruitment to the divisome. Together with EzrA, is a key component of the system that regulates PBP1 localization during cell cycle progression. Its main role could be the removal of PBP1 from the cell pole after pole maturation is completed. Also contributes to the recruitment of PBP1 to the division complex. Not essential for septum formation. The chain is Cell cycle protein GpsB from Levilactobacillus brevis (strain ATCC 367 / BCRC 12310 / CIP 105137 / JCM 1170 / LMG 11437 / NCIMB 947 / NCTC 947) (Lactobacillus brevis).